The sequence spans 29 residues: Acidic phospholipase A2 Omo-E6 (29 aa).

Ca(2+) is bound by residues Tyr-27 and Gly-29.

The cofactor is Ca(2+). In terms of tissue distribution, expressed by the venom gland.

It localises to the secreted. The catalysed reaction is a 1,2-diacyl-sn-glycero-3-phosphocholine + H2O = a 1-acyl-sn-glycero-3-phosphocholine + a fatty acid + H(+). Snake venom phospholipase A2 (PLA2) that inhibits the ADP- and collagen-induced human platelet aggregation. Exhibits strong hydrolytic activities and prefers the anionic micelles (dPPC with deoxycholate) to the zwitterionic micelles (dPPC with Triton X-100). PLA2 catalyzes the calcium-dependent hydrolysis of the 2-acyl groups in 3-sn-phosphoglycerides. The chain is Acidic phospholipase A2 Omo-E6 from Ovophis monticola (Chinese mountain pitviper).